Here is a 719-residue protein sequence, read N- to C-terminus: DNA replication licensing factor MCM7 (719 aa).

Ala-2 is subject to N-acetylalanine. Glycyl lysine isopeptide (Lys-Gly) (interchain with G-Cter in SUMO2) cross-links involve residues Lys-15 and Lys-28. Ser-121 and Ser-314 each carry phosphoserine. The 207-residue stretch at 332-538 folds into the MCM domain; sequence FYEKLAASIA…NDLRLAQHIT (207 aa). ATP is bound at residue Tyr-345. Phosphoserine is present on Ser-365. ATP is bound by residues Gly-384, Ala-386, Lys-387, Ser-388, and Asn-489. Phosphoserine is present on Ser-500. The short motif at 513-516 is the Arginine finger element; sequence SRFD. Arg-514 provides a ligand contact to ATP. The segment at 521–564 is interaction with RAD17; the sequence is IQDRPDRDNDLRLAQHITYVHQHSRQPPAQFEPLDMKLMRRYIA. The interval 577 to 719 is interaction with ATRIP; the sequence is LADYITAAYV…NTARTRITFV (143 aa). Arg-604 is an ATP binding site. Ser-678 carries the post-translational modification Phosphoserine.

The protein belongs to the MCM family. Component of the MCM2-7 complex. The complex forms a toroidal hexameric ring with the proposed subunit order MCM2-MCM6-MCM4-MCM7-MCM3-MCM5. Component of the CMG helicase complex, a hexameric ring of related MCM2-7 subunits stabilized by CDC45 and the tetrameric GINS complex. Interacts with the ATR-ATRIP complex and with RAD17. Interacts with TIPIN. Interacts with MCMBP. Interacts with ANKRD17. Component of the replisome complex composed of at least DONSON, MCM2, MCM7, PCNA and TICRR. Post-translationally, O-glycosylated (O-GlcNAcylated), in a cell cycle-dependent manner. In terms of processing, ubiquitinated by ECS(LRR1) E3 ubiquitin-protein ligase complex when forks converge following formation of DNA interstrand cross-links. During mitosis, ubiquitinated by TRAIP when forks converge following formation of DNA interstrand cross-links. Short ubiquitin chains on MCM7 promote recruitment of DNA glycosylase NEIL3. If the interstrand cross-link cannot be cleaved by NEIL3, the ubiquitin chains continue to grow on MCM7, promoting the unloading of the CMG helicase complex by the VCP/p97 ATPase.

The protein resides in the nucleus. Its subcellular location is the chromosome. The catalysed reaction is ATP + H2O = ADP + phosphate + H(+). Its function is as follows. Acts as a component of the MCM2-7 complex (MCM complex) which is the replicative helicase essential for 'once per cell cycle' DNA replication initiation and elongation in eukaryotic cells. Core component of CDC45-MCM-GINS (CMG) helicase, the molecular machine that unwinds template DNA during replication, and around which the replisome is built. The active ATPase sites in the MCM2-7 ring are formed through the interaction surfaces of two neighboring subunits such that a critical structure of a conserved arginine finger motif is provided in trans relative to the ATP-binding site of the Walker A box of the adjacent subunit. The six ATPase active sites, however, are likely to contribute differentially to the complex helicase activity. Required for S-phase checkpoint activation upon UV-induced damage. The chain is DNA replication licensing factor MCM7 (MCM7) from Bos taurus (Bovine).